We begin with the raw amino-acid sequence, 349 residues long: Sensory histidine kinase/phosphatase NtrB (349 aa).

The PAS domain occupies isoleucine 5 to aspartate 78. A Histidine kinase domain is found at glycine 136 to lysine 349. Histidine 139 is modified (phosphohistidine; by autocatalysis). Lysine 329 provides a ligand contact to ATP.

In terms of processing, autophosphorylated.

It is found in the cytoplasm. It catalyses the reaction ATP + protein L-histidine = ADP + protein N-phospho-L-histidine.. Member of the two-component regulatory system NtrB/NtrC, which controls expression of the nitrogen-regulated (ntr) genes in response to nitrogen limitation. Under conditions of nitrogen limitation, NtrB autophosphorylates and transfers the phosphoryl group to NtrC. In the presence of nitrogen, acts as a phosphatase that dephosphorylates and inactivates NtrC. The sequence is that of Sensory histidine kinase/phosphatase NtrB (glnL) from Salmonella typhi.